The sequence spans 74 residues: MEKKSLAALSFLLLLVLFVAQEIVVTEANTCEHLADTYRGVCFTNASCDDHCKNKAHLISGTCHDWKCFCTQNC.

Residues 1–28 form the signal peptide; it reads MEKKSLAALSFLLLLVLFVAQEIVVTEA. Disulfide bonds link Cys-31–Cys-74, Cys-42–Cys-63, Cys-48–Cys-68, and Cys-52–Cys-70.

It belongs to the DEFL family. As to expression, pods.

The protein resides in the secreted. Its function is as follows. Possesses antifungal activity. In Pisum sativum (Garden pea), this protein is Defensin-like protein 39 (PI39).